An 827-amino-acid polypeptide reads, in one-letter code: Beta-galactosidase 1 (827 aa).

Positions Met-1–Ala-25 are cleaved as a signal peptide. The Proton donor role is filled by Glu-187. N-linked (GlcNAc...) asparagine glycosylation is found at Asn-198 and Asn-249. Glu-259 functions as the Nucleophile in the catalytic mechanism. N-linked (GlcNAc...) asparagine glycosylation is found at Asn-260, Asn-366, Asn-392, Asn-502, Asn-520, Asn-578, Asn-586, and Asn-615. The SUEL-type lectin domain occupies Gly-746–Cys-827.

This sequence belongs to the glycosyl hydrolase 35 family.

It localises to the secreted. The protein resides in the extracellular space. Its subcellular location is the apoplast. It catalyses the reaction Hydrolysis of terminal non-reducing beta-D-galactose residues in beta-D-galactosides.. This Oryza sativa subsp. japonica (Rice) protein is Beta-galactosidase 1.